Consider the following 121-residue polypeptide: UPF0738 protein BPUM_1088 (121 aa).

This sequence belongs to the UPF0738 family.

The protein is UPF0738 protein BPUM_1088 of Bacillus pumilus (strain SAFR-032).